The following is a 25-amino-acid chain: PNPKVFFDMTIGGQSAGRIVMEEYA.

In terms of assembly, heterodimer of a 27 kDa subunit and a 17 kDa subunit; disulfide-linked. Post-translationally, SBTX is known to be glycosylated but it is not known which one of its two subunits is modified; contains 5% carbohydrates. In terms of tissue distribution, expressed in seeds, leaves, roots and stem (at protein level).

In terms of biological role, involved in plant defense. Inhibits spore germination in C.sojina, A.niger (at concentrations &gt;50 ug/ml) and P.herguei but not in F.oxysporum and F.solani. Does not inhibit vegetative mycelial growth. Inhibits growth of C.albicans and K.marxiannus but not P.membranifaciens or C.parapsilosis. Probably acts by affecting the cell membrane. Does not have urease, chitinase, beta-1,3-glucanase or hemagglutination activities. Does not inhibit trypsin. Injection into mice produces toxic effects such as dyspnea, tonic-clonic convulsion and death. The sequence is that of Soybean toxin 17 kDa chain from Glycine max (Soybean).